A 934-amino-acid chain; its full sequence is Protein translocase subunit SecA (934 aa).

Residues glutamine 87, 105-109 (GEGKT), and aspartate 515 each bind ATP. The Zn(2+) site is built by cysteine 918, cysteine 920, cysteine 929, and histidine 930.

The protein belongs to the SecA family. In terms of assembly, monomer and homodimer. Part of the essential Sec protein translocation apparatus which comprises SecA, SecYEG and auxiliary proteins SecDF-YajC and YidC. It depends on Zn(2+) as a cofactor.

Its subcellular location is the cell inner membrane. It is found in the cytoplasm. It catalyses the reaction ATP + H2O + cellular proteinSide 1 = ADP + phosphate + cellular proteinSide 2.. In terms of biological role, part of the Sec protein translocase complex. Interacts with the SecYEG preprotein conducting channel. Has a central role in coupling the hydrolysis of ATP to the transfer of proteins into and across the cell membrane, serving both as a receptor for the preprotein-SecB complex and as an ATP-driven molecular motor driving the stepwise translocation of polypeptide chains across the membrane. This is Protein translocase subunit SecA from Ralstonia nicotianae (strain ATCC BAA-1114 / GMI1000) (Ralstonia solanacearum).